A 227-amino-acid chain; its full sequence is Protein MobD (227 aa).

The polypeptide is Protein MobD (mobD) (Acidithiobacillus ferrooxidans (Thiobacillus ferrooxidans)).